The sequence spans 130 residues: Cystatin (130 aa).

The first 19 residues, 1–19 (MEWKIVVPLFAVAFTVANA), serve as a signal peptide directing secretion. The Secondary area of contact signature appears at 67–71 (QVVSG). 2 cysteine pairs are disulfide-bonded: Cys-85/Cys-94 and Cys-108/Cys-128.

Belongs to the cystatin family.

The protein localises to the secreted. In terms of biological role, cysteine proteinase inhibitor. The protein is Cystatin of Oncorhynchus mykiss (Rainbow trout).